We begin with the raw amino-acid sequence, 568 residues long: Peptidoglycan D,D-transpeptidase FtsI (568 aa).

The chain crosses the membrane as a helical span at residues 19–39; that stretch reads FVTLCSIVFLFLVILTLRIIF. Ser-302 (acyl-ester intermediate) is an active-site residue.

It belongs to the transpeptidase family. FtsI subfamily.

It is found in the cell inner membrane. The catalysed reaction is Preferential cleavage: (Ac)2-L-Lys-D-Ala-|-D-Ala. Also transpeptidation of peptidyl-alanyl moieties that are N-acyl substituents of D-alanine.. Its pathway is cell wall biogenesis; peptidoglycan biosynthesis. Catalyzes cross-linking of the peptidoglycan cell wall at the division septum. This is Peptidoglycan D,D-transpeptidase FtsI from Buchnera aphidicola subsp. Schizaphis graminum (strain Sg).